We begin with the raw amino-acid sequence, 203 residues long: uncharacterized protein (203 aa).

The Fe cation site is built by His-34, Glu-97, and His-172.

The protein belongs to the hemerythrin family.

The protein localises to the mitochondrion. This is an uncharacterized protein from Schizosaccharomyces pombe (strain 972 / ATCC 24843) (Fission yeast).